Consider the following 212-residue polypeptide: HTH-type transcriptional repressor KstR (212 aa).

Low complexity predominate over residues 1–11 (MTTSSRSRSST). The segment at 1 to 28 (MTTSSRSRSSTVAAATLGEDDLSSNAQK) is disordered. One can recognise an HTH tetR-type domain in the interval 28–88 (KERRKRILDA…SALAREFERI (61 aa)). Residues 51–70 (QMRAVAERADVAVGTLYRYF) constitute a DNA-binding region (H-T-H motif).

In terms of assembly, homodimer.

Controls the expression of genes used for utilizing diverse lipids as energy sources. This chain is HTH-type transcriptional repressor KstR (kstR), found in Rhodococcus jostii (strain RHA1).